The sequence spans 395 residues: Acetate kinase (395 aa).

Asn7 lines the Mg(2+) pocket. Lys14 is a binding site for ATP. A substrate-binding site is contributed by Arg92. The Proton donor/acceptor role is filled by Asp149. Residues 207–211 (HLGNG), 282–284 (DMR), and 329–333 (GIGEN) each bind ATP. Glu382 contributes to the Mg(2+) binding site.

It belongs to the acetokinase family. Homodimer. It depends on Mg(2+) as a cofactor. Mn(2+) serves as cofactor.

It localises to the cytoplasm. It catalyses the reaction acetate + ATP = acetyl phosphate + ADP. It participates in metabolic intermediate biosynthesis; acetyl-CoA biosynthesis; acetyl-CoA from acetate: step 1/2. Catalyzes the formation of acetyl phosphate from acetate and ATP. Can also catalyze the reverse reaction. The polypeptide is Acetate kinase (Brachyspira hyodysenteriae (strain ATCC 49526 / WA1)).